The primary structure comprises 447 residues: Tubulin beta chain (447 aa).

GTP-binding residues include glutamine 11, glutamate 69, serine 138, glycine 142, threonine 143, glycine 144, asparagine 204, and asparagine 226. Glutamate 69 serves as a coordination point for Mg(2+). Positions 424–447 are disordered; it reads QYQEASVSEGEEEYDEEAPLEGEE. The span at 432-447 shows a compositional bias: acidic residues; the sequence is EGEEEYDEEAPLEGEE.

It belongs to the tubulin family. As to quaternary structure, dimer of alpha and beta chains. A typical microtubule is a hollow water-filled tube with an outer diameter of 25 nm and an inner diameter of 15 nM. Alpha-beta heterodimers associate head-to-tail to form protofilaments running lengthwise along the microtubule wall with the beta-tubulin subunit facing the microtubule plus end conferring a structural polarity. Microtubules usually have 13 protofilaments but different protofilament numbers can be found in some organisms and specialized cells. Mg(2+) is required as a cofactor.

It localises to the cytoplasm. Its subcellular location is the cytoskeleton. In terms of biological role, tubulin is the major constituent of microtubules, a cylinder consisting of laterally associated linear protofilaments composed of alpha- and beta-tubulin heterodimers. Microtubules grow by the addition of GTP-tubulin dimers to the microtubule end, where a stabilizing cap forms. Below the cap, tubulin dimers are in GDP-bound state, owing to GTPase activity of alpha-tubulin. This is Tubulin beta chain (TUB1) from Dothistroma septosporum (Red band needle blight fungus).